We begin with the raw amino-acid sequence, 197 residues long: Class A basic helix-loop-helix protein 15 (197 aa).

Over residues Met-1–Thr-12 the composition is skewed to basic residues. 2 disordered regions span residues Met-1–Arg-82 and Thr-175–Ser-197. Thr-12 and Thr-25 each carry phosphothreonine. A compositionally biased stretch (polar residues) spans Asp-27–Ser-36. The segment covering Ser-65–Arg-82 has biased composition (basic and acidic residues). The bHLH domain occupies Gln-72–Leu-124.

As to quaternary structure, forms homodimers or heterodimers with TCF3 gene products E12 and E47. These dimers bind to the E-box site, however, heterodimer with MYOD1 does not bind target DNA. As to expression, expressed in liver, spleen and olfactory epithelium. Weaker expression is seen in skeletal muscle, cardiac muscle, eye and brain tissue.

Its subcellular location is the nucleus. Its function is as follows. Plays a role in controlling the transcriptional activity of MyoD, ensuring that expanding myoblast populations remain undifferentiated. Repression may occur through muscle-specific E-box occupancy by homodimers. May also negatively regulate bHLH-mediated transcription through an N-terminal repressor domain. Serves as a key regulator of acinar cell function, stability, and identity. Also required for normal organelle localization in exocrine cells and for mitochondrial calcium ion transport. May function as a unique regulator of gene expression in several different embryonic and postnatal cell lineages. Binds to the E-box consensus sequence 5'-CANNTG-3'. This chain is Class A basic helix-loop-helix protein 15 (Bhlha15), found in Rattus norvegicus (Rat).